Consider the following 423-residue polypeptide: Ferrochelatase, mitochondrial (423 aa).

The transit peptide at 1–54 (MRSLGANMAAALRAAGVLLRDPLVSSSWRVYQPWRWKSVAAAAAATTETAQHAQ) directs the protein to the mitochondrion. At lysine 57 the chain carries N6-acetyllysine. Residues arginine 115, tyrosine 123, and serine 130 each contribute to the protoporphyrin IX site. Lysine 138 bears the N6-succinyllysine mark. Cysteine 196 lines the [2Fe-2S] cluster pocket. Active-site residues include histidine 230 and aspartate 383. The [2Fe-2S] cluster site is built by cysteine 403, cysteine 406, and cysteine 411. Lysine 415 carries the N6-acetyllysine; alternate modification. An N6-succinyllysine; alternate modification is found at lysine 415.

It belongs to the ferrochelatase family. As to quaternary structure, homodimer. Homotetramer. Interaction with PGRMC1; the interaction results in decreased FECH activity. Interacts with ABCB10 and SLC25A37; this interaction forms an oligomeric complex. Forms a complex with ABCB7 and ABCB10, where a dimeric FECH bridges ABCB7 and ABCB10 homodimers; this complex may be required for cellular iron homeostasis, mitochondrial function and heme biosynthesis. Interacts with ABCB7 and ABCB10. Requires [2Fe-2S] cluster as cofactor.

The protein resides in the mitochondrion inner membrane. It catalyses the reaction heme b + 2 H(+) = protoporphyrin IX + Fe(2+). It participates in porphyrin-containing compound metabolism; protoheme biosynthesis; protoheme from protoporphyrin-IX: step 1/1. Functionally, catalyzes the ferrous insertion into protoporphyrin IX and participates in the terminal step in the heme biosynthetic pathway. The protein is Ferrochelatase, mitochondrial of Pan troglodytes (Chimpanzee).